The following is a 320-amino-acid chain: GTP 3',8-cyclase (320 aa).

In terms of domain architecture, Radical SAM core spans glutamine 5 to alanine 225. Arginine 14 lines the GTP pocket. Residues cysteine 21 and cysteine 25 each coordinate [4Fe-4S] cluster. S-adenosyl-L-methionine is bound at residue tyrosine 27. A [4Fe-4S] cluster-binding site is contributed by cysteine 28. Arginine 64 contributes to the GTP binding site. Glycine 68 is a binding site for S-adenosyl-L-methionine. Residue threonine 95 participates in GTP binding. Serine 119 is an S-adenosyl-L-methionine binding site. GTP is bound at residue lysine 155. Methionine 189 provides a ligand contact to S-adenosyl-L-methionine. The [4Fe-4S] cluster site is built by cysteine 248 and cysteine 251. Position 253-255 (arginine 253–arginine 255) interacts with GTP. Cysteine 265 is a [4Fe-4S] cluster binding site.

This sequence belongs to the radical SAM superfamily. MoaA family. As to quaternary structure, monomer and homodimer. It depends on [4Fe-4S] cluster as a cofactor.

It carries out the reaction GTP + AH2 + S-adenosyl-L-methionine = (8S)-3',8-cyclo-7,8-dihydroguanosine 5'-triphosphate + 5'-deoxyadenosine + L-methionine + A + H(+). Its pathway is cofactor biosynthesis; molybdopterin biosynthesis. Functionally, catalyzes the cyclization of GTP to (8S)-3',8-cyclo-7,8-dihydroguanosine 5'-triphosphate. The sequence is that of GTP 3',8-cyclase from Campylobacter jejuni subsp. doylei (strain ATCC BAA-1458 / RM4099 / 269.97).